The sequence spans 333 residues: Probable ABC transporter permease protein y4mJ (333 aa).

10 helical membrane passes run 30 to 50 (LAIA…VPQA), 62 to 82 (AGAP…TGGI), 84 to 104 (LSVG…MASG), 110 to 130 (ALIG…LVTV), 133 to 153 (LAPF…AFIV), 175 to 195 (IPGV…IEIF), 228 to 248 (FAYV…ISYI), 253 to 273 (STAG…GGAS), 274 to 294 (LLGG…ITVI), and 300 to 320 (LIGI…LIAV).

The protein belongs to the binding-protein-dependent transport system permease family. AraH/RbsC subfamily.

It localises to the cell inner membrane. Probably part of the binding-protein-dependent transport system y4mIJK. This system probably transports a sugar. Probably responsible for the translocation of the substrate across the membrane. The polypeptide is Probable ABC transporter permease protein y4mJ (Sinorhizobium fredii (strain NBRC 101917 / NGR234)).